The primary structure comprises 165 residues: Endoribonuclease YbeY (165 aa).

Zn(2+) contacts are provided by H130, H134, and H140.

It belongs to the endoribonuclease YbeY family. The cofactor is Zn(2+).

It localises to the cytoplasm. Single strand-specific metallo-endoribonuclease involved in late-stage 70S ribosome quality control and in maturation of the 3' terminus of the 16S rRNA. The polypeptide is Endoribonuclease YbeY (Streptococcus pyogenes serotype M28 (strain MGAS6180)).